A 312-amino-acid polypeptide reads, in one-letter code: Porphobilinogen deaminase (312 aa).

C241 is modified (S-(dipyrrolylmethanemethyl)cysteine).

This sequence belongs to the HMBS family. In terms of assembly, monomer. Dipyrromethane is required as a cofactor.

It carries out the reaction 4 porphobilinogen + H2O = hydroxymethylbilane + 4 NH4(+). Its pathway is porphyrin-containing compound metabolism; protoporphyrin-IX biosynthesis; coproporphyrinogen-III from 5-aminolevulinate: step 2/4. Tetrapolymerization of the monopyrrole PBG into the hydroxymethylbilane pre-uroporphyrinogen in several discrete steps. This is Porphobilinogen deaminase from Aliarcobacter butzleri (strain RM4018) (Arcobacter butzleri).